The chain runs to 1457 residues: Bridge-like lipid transfer protein family member 3B (1457 aa).

A Chorein N-terminal domain is found at 3–94 (GIIKKQILKH…DKVIMEMSTC (92 aa)). Disordered stretches follow at residues 267-295 (STEQ…KTPQ) and 409-449 (DRNL…PQPS). Polar residues predominate over residues 278-295 (PTQSSTVTSSAQHVKTPQ). Phosphoserine is present on residues Ser-414, Ser-418, Ser-774, and Ser-934. 3 disordered regions span residues 975-1038 (SEDE…TGKG), 1056-1099 (ASLS…LSVS), and 1145-1183 (SNTS…TQEN). Residues 980 to 995 (SGLSHKSGSGEMTSEG) are compositionally biased toward polar residues. Ser-1008 carries the phosphoserine modification. Residues 1145–1180 (SNTSCQSPAESVNTSANTQTCGEASPEAVSTNSEGT) are compositionally biased toward polar residues. Positions 1410 to 1455 (ANFLDITREQLMEENECLRQRLAQAKMELAEAHSARDELLHQMKRM) form a coiled coil.

Homodimer (via N-terminus). Associates with the Golgi-associated retrograde protein (GARP) complex. Interacts with GARP complex component VPS52. Interacts (via C-terminal coiled-coil domain) with STX6.

The protein localises to the cytoplasm. Its subcellular location is the cytosol. The protein resides in the early endosome. Tube-forming lipid transport protein which mediates the transfer of lipids between membranes at organelle contact sites. Required for retrograde traffic of vesicle clusters in the early endocytic pathway to the Golgi complex. The protein is Bridge-like lipid transfer protein family member 3B (Bltp3b) of Mus musculus (Mouse).